We begin with the raw amino-acid sequence, 548 residues long: Ankyrin repeat domain-containing protein SOWAHA (548 aa).

The N-terminal stretch at 1–19 (MALAAAAAAAAAAAGVSQA) is a signal peptide. A disordered region spans residues 114 to 212 (EDNCAPGAPH…PPTAQVPPQK (99 aa)). Residues 136–153 (SAPSELQHTPETLPSEVT) show a composition bias toward polar residues. Residues 198–212 (GPEPAPPTAQVPPQK) are compositionally biased toward pro residues. The residue at position 258 (Ser258) is a Phosphoserine. 2 ANK repeats span residues 344–373 (SGFT…RGGA) and 383–413 (GGYT…QVHV). The segment at 512-548 (PRKKTKIRGGLPSFTEISHRSTPGPLAGLVPSLPPPT) is disordered.

This sequence belongs to the SOWAH family.

The protein is Ankyrin repeat domain-containing protein SOWAHA (Sowaha) of Mus musculus (Mouse).